The primary structure comprises 1045 residues: Unconventional myosin-Ia (1045 aa).

A Myosin motor domain is found at 11-697; the sequence is AAVGDLVMLD…TLFDLEKRRQ (687 aa). 104-111 contributes to the ATP binding site; that stretch reads GESGAGKT. The segment at 574-596 is actin-binding; it reads VATLMKNLYSKNPNYIRCIKPND. IQ domains are found at residues 701-727, 723-750, and 746-774; these read AELA…RKSQ, MRKS…KRSV, and MKRS…RSDA. A TH1 domain is found at 861 to 1044; that stretch reads KALYAQSLQQ…RGSHKMEILV (184 aa).

Belongs to the TRAFAC class myosin-kinesin ATPase superfamily. Myosin family. As to expression, intestine.

Functionally, could play an important role in morphogenesis and function of intestinal microvilli. In Gallus gallus (Chicken), this protein is Unconventional myosin-Ia (MYO1A).